We begin with the raw amino-acid sequence, 296 residues long: NADH-ubiquinone oxidoreductase chain 2 (296 aa).

8 helical membrane passes run 5-25 (LCLF…GLWL), 49-69 (YFLI…NQSF), 71-91 (FLIP…MWLV), 114-134 (LLGL…SAFI), 167-187 (FFLM…AVIL), 209-229 (ASIS…GFFI), 242-262 (LLVL…FSIA), and 276-296 (KMEI…LFFL).

It belongs to the complex I subunit 2 family.

It localises to the mitochondrion inner membrane. It carries out the reaction a ubiquinone + NADH + 5 H(+)(in) = a ubiquinol + NAD(+) + 4 H(+)(out). Core subunit of the mitochondrial membrane respiratory chain NADH dehydrogenase (Complex I) that is believed to belong to the minimal assembly required for catalysis. Complex I functions in the transfer of electrons from NADH to the respiratory chain. The immediate electron acceptor for the enzyme is believed to be ubiquinone. This is NADH-ubiquinone oxidoreductase chain 2 (ND2) from Artemia franciscana (Brine shrimp).